Reading from the N-terminus, the 317-residue chain is Bile salt hydrolase/transferase (317 aa).

Catalysis depends on Cys2, which acts as the Nucleophile; acyl-thioester intermediate. Positions 2 and 18 each coordinate deoxycholate. Residue Asn82 coordinates taurine.

Belongs to the peptidase C59 family. As to quaternary structure, homotetramer. The tetramer consists of a dimer of dimers.

The enzyme catalyses glycocholate + H2O = cholate + glycine. The catalysed reaction is glycodeoxycholate + H2O = deoxycholate + glycine. It carries out the reaction chenodeoxycholate + glycine = glycochenodeoxycholate + H2O. It catalyses the reaction cholate + taurine = taurocholate + H2O. The enzyme catalyses taurodeoxycholate + H2O = deoxycholate + taurine. The catalysed reaction is taurochenodeoxycholate + H2O = chenodeoxycholate + taurine. It carries out the reaction an L-alpha-amino acid + cholate = an N-choloyl-L-alpha-amino acid + H2O. It catalyses the reaction an L-alpha-amino acid + taurocholate = an N-choloyl-L-alpha-amino acid + taurine. The enzyme catalyses cholate + L-alanine = L-alanocholate + H2O. The catalysed reaction is taurocholate + L-alanine = L-alanocholate + taurine. It carries out the reaction cholate + L-serine = L-serocholate + H2O. It catalyses the reaction taurocholate + L-serine = L-serocholate + taurine. The enzyme catalyses cholate + L-histidine = L-histidocholate + H2O. The catalysed reaction is taurocholate + L-histidine = L-histidocholate + taurine. It functions in the pathway lipid metabolism; bile acid biosynthesis. Hydrolase activity is competitively inhibited by the products cholate (CA) and deoxycholate (DCA), and by phenylacetate and 4-aminophenylacetate. Penicillin V and penicillin G show mixed inhibition. Strongly inhibited by thiol enzyme inhibitors in vitro. Possesses dual functions in bile acid metabolism. Acts as a bile salt hydrolase that catalyzes the deconjugation of glycine- and taurine-linked bile salts, which occurs naturally in the intestines of humans, releasing amino acid residues and deconjugated bile salts (bile acids). Can hydrolyze the amide bond in all six major human conjugated bile salts, namely glycocholate (GCA), glycodeoxycholate (GDCA), glycochenodeoxycholate (GCDCA), taurocholate (TCA), taurodeoxycholate (TDCA) and taurochenodeoxycholate (TCDCA). Shows a slight preference for glycine-conjugated bile acids as substrates. Also acts as an amine N-acyltransferase that conjugates a wide variety of amino acids to conjugated and non-conjugated bile acids, thus producing bacterial bile acid amidates (BBAAs) - also named microbially conjugated bile acids (MCBAs) - in the gastrointestinal tract. These BBAAs may facilitate communication between the microbiota and host through the activation of human ligand-activated transcription factors. Is totally inactive toward penicillin V. The protein is Bile salt hydrolase/transferase of Bifidobacterium longum.